The primary structure comprises 329 residues: Isopenicillin N synthase (329 aa).

The isopenicillin N site is built by R87, Y91, S183, and Y189. Residues R87, Y91, S183, Y189, H212, and D214 each coordinate N-[(5S)-5-amino-5-carboxypentanoyl]-L-cysteinyl-D-valine. Positions 180–286 (TLSSVSLIRY…RLSLPFFLNA (107 aa)) constitute a Fe2OG dioxygenase domain. Fe(2+) is bound by residues H212, D214, and H268. R277 provides a ligand contact to 2-oxoglutarate. S279 serves as a coordination point for isopenicillin N. N-[(5S)-5-amino-5-carboxypentanoyl]-L-cysteinyl-D-valine is bound at residue S279.

Belongs to the iron/ascorbate-dependent oxidoreductase family. Requires Fe cation as cofactor. It depends on L-ascorbate as a cofactor.

It carries out the reaction N-[(5S)-5-amino-5-carboxypentanoyl]-L-cysteinyl-D-valine + O2 = isopenicillin N + 2 H2O. Its pathway is antibiotic biosynthesis; penicillin G biosynthesis; penicillin G from L-alpha-aminoadipate and L-cysteine and L-valine: step 2/3. In terms of biological role, removes, in the presence of oxygen, 4 hydrogen atoms from delta-L-(alpha-aminoadipyl)-L-cysteinyl-D-valine (ACV) to form the azetidinone and thiazolidine rings of isopenicillin. The protein is Isopenicillin N synthase (pcbC) of Streptomyces jumonjinensis.